Reading from the N-terminus, the 612-residue chain is Transcription factor unc-37 (612 aa).

Residues 143 to 228 form a disordered region; sequence FASPHVNGGD…SNSRARQQQQ (86 aa). Positions 150–159 are enriched in gly residues; sequence GGDGAGGSSG. The tract at residues 153 to 196 is CCN domain; it reads GAGGSSGGASEAKKAKLEDPDDGELEIDVTNDDHPSTASNGGAA. Positions 171–182 are enriched in acidic residues; sequence DPDDGELEIDVT. A compositionally biased stretch (polar residues) spans 202 to 221; the sequence is DSTNSVASSGASTPSIASNS. WD repeat units follow at residues 308–339, 372–402, 414–444, 456–486, 538–568, and 579–609; these read GIPT…RVYT, LKEN…ALWD, TDSQ…LIYD, GHQD…RCWD, QHES…NAWR, and KENS…TLYA.

This sequence belongs to the WD repeat Groucho/TLE family. Interacts with unc-4. Interacts with ref-1. May interact with mls-1.

Its subcellular location is the nucleus. In terms of biological role, transcriptional corepressor that functions with the neural specificity gene unc-4 to govern motor neuron identity. In concert with unc-4, represses the expression of VB-specific genes such as ceh-12, thereby preventing the adoption of VB motor neuron fate. May function with transcription factor mls-1 to promote uterine muscle specification and formation. In Caenorhabditis elegans, this protein is Transcription factor unc-37 (unc-37).